Reading from the N-terminus, the 483-residue chain is Probable cobyric acid synthase (483 aa).

One can recognise a GATase cobBQ-type domain in the interval 247–433 (ELHIQIIKLP…LHGIFHNFAF (187 aa)). C325 (nucleophile) is an active-site residue. The active site involves H425.

It belongs to the CobB/CobQ family. CobQ subfamily.

It functions in the pathway cofactor biosynthesis; adenosylcobalamin biosynthesis. Its function is as follows. Catalyzes amidations at positions B, D, E, and G on adenosylcobyrinic A,C-diamide. NH(2) groups are provided by glutamine, and one molecule of ATP is hydrogenolyzed for each amidation. The polypeptide is Probable cobyric acid synthase (Thermococcus gammatolerans (strain DSM 15229 / JCM 11827 / EJ3)).